The chain runs to 331 residues: Ferredoxin--NADP reductase (331 aa).

FAD-binding residues include Glu-38, Gln-46, Tyr-51, Ala-91, Leu-125, Asp-282, and Ser-323.

The protein belongs to the ferredoxin--NADP reductase type 2 family. As to quaternary structure, homodimer. FAD is required as a cofactor.

It catalyses the reaction 2 reduced [2Fe-2S]-[ferredoxin] + NADP(+) + H(+) = 2 oxidized [2Fe-2S]-[ferredoxin] + NADPH. In Deinococcus geothermalis (strain DSM 11300 / CIP 105573 / AG-3a), this protein is Ferredoxin--NADP reductase.